A 704-amino-acid polypeptide reads, in one-letter code: Meprin A subunit beta (704 aa).

The N-terminal stretch at 1 to 20 (MDARHWPWFLVFATFLLVSG) is a signal peptide. The propeptide occupies 21–64 (LPAPEKFVKDIDGGIDQDIFDINEDLGLDLFEGDIKLEASGRNS). At 21–654 (LPAPEKFVKD…RCEKRGSTKD (634 aa)) the chain is on the extracellular side. Residues 63-257 (NSIIGDNYRW…LKLNQLYSCT (195 aa)) enclose the Peptidase M12A domain. Disulfide bonds link Cys104–Cys256, Cys125–Cys145, and Cys266–Cys428. His153 serves as a coordination point for Zn(2+). Residue Glu154 is part of the active site. His157 and His163 together coordinate Zn(2+). 8 N-linked (GlcNAc...) asparagine glycosylation sites follow: Asn193, Asn219, Asn316, Asn422, Asn437, Asn528, Asn547, and Asn592. An MAM domain is found at 261 to 430 (SFMDSCDFEL…INLSETRCPH (170 aa)). The region spanning 431–585 (HIWHIQNFTQ…GDDVYILLTV (155 aa)) is the MATH domain. The 41-residue stretch at 607–647 (VHNACSEVECQNGGICTLQEGRAECKCPAGEDWWYMGKRCE) folds into the EGF-like domain. Cystine bridges form between Cys611-Cys622, Cys616-Cys631, and Cys633-Cys646. Residues 655-678 (TIVIAVSSTVTVFAVMLIITLISV) traverse the membrane as a helical segment. Residues 679–704 (YCTRRKYRKKASAKTAAMNLENQHAF) lie on the Cytoplasmic side of the membrane. Thr693 is subject to Phosphothreonine.

In terms of assembly, homotetramer consisting of disulfide-linked beta subunits, or heterotetramer of two alpha and two beta subunits formed by non-covalent association of two disulfide-linked heterodimers. Interacts with MBL2 through its carbohydrate moiety. This interaction may inhibit its catalytic activity. Interacts with TSPAN8. Requires Zn(2+) as cofactor. Post-translationally, N-glycosylated; contains high mannose and/or complex biantennary structures. Proteolytically activated by trypsin in the intestinal lumen and kallikrein-related peptidases in other tissues. In terms of processing, phosphorylated by PKC at multiple sites of its cytoplasmic part. Phosphorylation dcreases activity at the cell surface, leading to diminished substrate cleavage. In terms of tissue distribution, kidney, intestinal brush borders and salivary ducts.

It is found in the cell membrane. It localises to the secreted. The catalysed reaction is Hydrolysis of proteins, including azocasein, and peptides. Hydrolysis of 5-His-|-Leu-6, 6-Leu-|-Cys-7, 14-Ala-|-Leu-15 and 19-Cys-|-Gly-20 bonds in insulin B chain.. Strongly inhibited by fetuin-A/AHSG. In terms of biological role, membrane metallopeptidase that sheds many membrane-bound proteins. Exhibits a strong preference for acidic amino acids at the P1' position. Known substrates include: FGF19, VGFA, IL1B, IL18, procollagen I and III, E-cadherin, KLK7, gastrin, ADAM10, tenascin-C. The presence of several pro-inflammatory cytokine among substrates implicate MEP1B in inflammation. It is also involved in tissue remodeling due to its capability to degrade extracellular matrix components. The protein is Meprin A subunit beta (Mep1b) of Rattus norvegicus (Rat).